A 445-amino-acid chain; its full sequence is Phosphoglucosamine mutase (445 aa).

The active-site Phosphoserine intermediate is the Ser-102. Mg(2+)-binding residues include Ser-102, Asp-241, Asp-243, and Asp-245. Ser-102 is subject to Phosphoserine.

It belongs to the phosphohexose mutase family. Requires Mg(2+) as cofactor. Activated by phosphorylation.

It carries out the reaction alpha-D-glucosamine 1-phosphate = D-glucosamine 6-phosphate. Its function is as follows. Catalyzes the conversion of glucosamine-6-phosphate to glucosamine-1-phosphate. This is Phosphoglucosamine mutase from Escherichia coli O157:H7.